A 99-amino-acid chain; its full sequence is Bacterial microcompartment shell vertex protein EutN (99 aa).

A BMV domain is found at 5–87; that stretch reads MKLAVVTGQI…VDLCVIGIVD (83 aa).

This sequence belongs to the CcmL/EutN family. In terms of assembly, homopentamer with a small central pore.

It is found in the bacterial microcompartment. The protein operates within amine and polyamine degradation; ethanolamine degradation. In terms of biological role, probably forms vertices in the bacterial microcompartment (BMC) shell dedicated to ethanolamine degradation. Expression of eutK, eutL, eutM, eutN, eutS (eutSMNLK) in E.coli leads to formation of a single BMC. Coexpression of eutQ with eutSMNLK permits E.coli to make cells with more than one mobile BMC, as is usual in vivo. It may be involved in transporting positively charged molecules into and out of the BMC. Its function is as follows. The ethanolamine (EA) catabolic bacterial microcompartment (BMC) probably concentrates low levels of ethanolamine catabolic enzymes, concentrates volatile reaction intermediates, keeps the level of toxic acetaldehyde low, generates enough acetyl-CoA to support cell growth, and maintains a pool of free coenzyme A (CoA) and NAD. Functionally, expression of the eut operon allows this bacteria to use ethanolamine (EA) as a carbon, nitrogen and energy source. It relies on cobalamin (vitamin B12) both as a cofactor for the ethanolamine ammonia-lyase (EAL) activity and to induce the operon. EA enhances bacterial survival in macrophages in a concentration-dependent manner, suggesting it is an important nutrient during infection. The sequence is that of Bacterial microcompartment shell vertex protein EutN from Salmonella typhimurium (strain LT2 / SGSC1412 / ATCC 700720).